The primary structure comprises 2335 residues: Histone-lysine N-methyltransferase ATXR3 (2335 aa).

4 disordered regions span residues 30 to 142 (NESK…FKDE), 332 to 355 (STGNRLKRHGAEPDSIERKHSYAD), 371 to 556 (CSRS…SSSK), and 902 to 961 (DQVP…KTDT). 2 stretches are compositionally biased toward polar residues: residues 31–46 (ESKTAATTENGHTSIA) and 53–62 (QPANKPSASS). The span at 65 to 84 (VKKKRIVKVIRKVVKRRPKQ) shows a compositional bias: basic residues. The Nuclear localization signal 1 motif lies at 67 to 74 (KKRIVKVI). Positions 97–112 (PPSQVVQLPAESQLQI) are enriched in polar residues. Composition is skewed to basic and acidic residues over residues 340 to 353 (HGAEPDSIERKHSY), 371 to 390 (CSRSLHSDHYSQHSAERLYR), and 430 to 452 (WSPHDRSRYHENRDRSPYARERS). Residues 461 to 475 (HARKRSPRDRRHHDY) show a composition bias toward basic residues. Composition is skewed to basic and acidic residues over residues 485-498 (SPHDRSRPSDRRDY), 507-548 (QSDR…ESNG), and 910-921 (PRAKVRSKERCP). Positions 527 to 534 (ERRDCQTG) match the Nuclear localization signal 2 motif. Residues 922–932 (SRPARPSPASS) are compositionally biased toward low complexity. Positions 941-961 (SHSQSTASTGQDSQGLWKTDT) are enriched in polar residues. A Nuclear localization signal 3 motif is present at residues 1382–1389 (ARRSSAIL). The segment at 1532 to 1572 (NRKSFSSESDTSSELSDNGKSDNYSSASASESESDIRSEGR) is disordered. The span at 1535-1547 (SFSSESDTSSELS) shows a compositional bias: low complexity. An SET domain is found at 1765-1904 (KEIESRSDDK…YGEEITFDYN (140 aa)). Cysteine 1868 is a binding site for Zn(2+). Tyrosine 1903 serves as a coordination point for S-adenosyl-L-methionine. The region spanning 1914–1930 (EASVCLCGSQVCRGSYL) is the Post-SET domain. Residues cysteine 1918, cysteine 1920, and cysteine 1925 each contribute to the Zn(2+) site.

It belongs to the class V-like SAM-binding methyltransferase superfamily. Histone-lysine methyltransferase family. TRX/MLL subfamily. As to expression, expressed in roots, leaves, stems and inflorescences.

The protein resides in the nucleus. The enzyme catalyses L-lysyl(4)-[histone H3] + 3 S-adenosyl-L-methionine = N(6),N(6),N(6)-trimethyl-L-lysyl(4)-[histone H3] + 3 S-adenosyl-L-homocysteine + 3 H(+). Functionally, histone methyltransferase specifically required for trimethylation of 'Lys-4' of histone H3 (H3K4me3) and is crucial for both sporophyte and gametophyte development. Function as a diurnal 'writer' to counteract the nocturne 'eraser' demethylase activity of JMJ14 thus orchestrating the circadian rhythm of histone modifications (e.g. H3K4me3) and modulating the rhythmic expression of diurnal target genes; this mechanism relies also on the circadian clock oscillators CCA1 and LHY. The chain is Histone-lysine N-methyltransferase ATXR3 from Arabidopsis thaliana (Mouse-ear cress).